Consider the following 1789-residue polypeptide: Genome polyprotein (1789 aa).

Residues 1–25 (MMMASKDVVPTAASSENANNNSSIK) form a disordered region. The tract at residues 1–183 (MMMASKDVVP…MCPLPPVDQR (183 aa)) is interaction with host MAP1LC3A/LC3. The span at 12–23 (AASSENANNNSS) shows a compositional bias: low complexity. Positions 184–398 (STTPATEPTI…ASLLPDFHLQ (215 aa)) are interaction with NTPase. The interaction with NS4 stretch occupies residues 301–398 (HPTQDWSRDT…ASLLPDFHLQ (98 aa)). Host ER membrane association regions lie at residues 318–349 (KLEM…KPLN) and 360–398 (TFMG…FHLQ). The interaction with NS1-2 and NS4 and homooligomerization stretch occupies residues 399-574 (GPEDLARDLV…GKTKAAEHLA (176 aa)). Residues 532–697 (RISMARAALA…EHTRKVSPGD (166 aa)) form the SF3 helicase domain. Position 560-567 (560-567 (GPPGIGKT)) interacts with ATP. The segment at 651 to 756 (AIVITTNAPG…AVALTMERQD (106 aa)) is important for mitochondrion targeting. The tract at residues 826–832 (YIIESDG) is functions as endoplasmic reticulum export signal. The host membrane association stretch occupies residues 865–910 (RAVAYASCFQSAITTILQMAGSALVINRAVKRMFGTRTAAMALEGP). Residues 958-981 (DAVPEGKNKGKTKKGRGRKNNYNA) form a disordered region. Basic residues predominate over residues 966–976 (KGKTKKGRGRK). The segment at 989-994 (DEEYEE) is acidic. Tyr992 carries the post-translational modification O-(5'-phospho-RNA)-tyrosine. The interval 1084-1100 (WADDDREVDYNEKINFE) is interaction with host EIF4G. The Peptidase C37 domain occupies 1101-1281 (APPTLWSRVT…QAGEGETALE (181 aa)). Active-site for 3CLpro activity residues include His1130, Glu1154, and Cys1239. Residues 1516–1637 (KNHFDADYTA…STDIDFDPAR (122 aa)) enclose the RdRp catalytic domain. Asp1520, Asp1522, Asp1624, and Glu1625 together coordinate Mg(2+).

In terms of assembly, homodimer. Homooligomer. Interacts with NTPase; this interaction increases the proapoptotic activity of the NTPase and is crucial for the formation of the viral replication complex. Interacts with NS4; this interaction is crucial for the formation of the viral replication complex. Interacts (via N-terminus) with host VAPA. Interacts with host MAP1LC3A/LC3; this interaction does not seem to be linked to host autophagy, but rather plays a role in the formation of viral factories. As to quaternary structure, homooligomer. Interacts with NS1-2; this interaction increases the proapoptotic activity of the NTPase and is crucial for the formation of the viral replication complex. Interacts with NS4; this interaction increases the proapoptotic activity of the NTPase. Homodimer. Monomer; in solution. In terms of assembly, interacts with NTPase; this interaction increases the proapoptotic activity of the NTPase. Interacts with NS1-2; this interaction is crucial for the formation of the viral replication complex. As to quaternary structure, monomer. Interacts with the RNA-directed RNA polymerase; this interaction induces the multimerization of the RdRp and enhances its activity. Interacts with host IEF4G1; this interaction plays a role in translation of viral proteins. Homohexamer; also forms fibrous hexameric oligomer. Interacts with the viral genome-linked protein; this interaction induces the multimerization of the RdRp and enhances its activity. Requires Mg(2+) as cofactor. The cofactor is Mn(2+). Specific enzymatic cleavages in vivo yield mature proteins. 3CLpro is first autocatalytically cleaved, then processes the whole polyprotein. NS1/2-3 and NS3-4 sites are cleaved rapidly and NS4-5, NS5-6, and NS6-7 sites are processed subsequently and less efficiently. In terms of processing, VPg is uridylylated by the polymerase and is covalently attached to the 5'-end of the polyadenylated genomic and subgenomic RNAs. This uridylylated form acts as a nucleotide-peptide primer for the polymerase. Post-translationally, cleaved by host CASP3/caspase 3 at 18-22 h.p.i. The cleavage allows NS1 secretion, which is essential for intestinal infection and resistance to IFN-lambda.

It is found in the host Golgi apparatus membrane. The protein resides in the secreted. It localises to the host endoplasmic reticulum membrane. Its subcellular location is the host cytoplasm. The protein localises to the host perinuclear region. The enzyme catalyses a ribonucleoside 5'-triphosphate + H2O = a ribonucleoside 5'-diphosphate + phosphate + H(+). It catalyses the reaction Endopeptidase with a preference for cleavage when the P1 position is occupied by Glu-|-Xaa and the P1' position is occupied by Gly-|-Yaa.. The catalysed reaction is RNA(n) + a ribonucleoside 5'-triphosphate = RNA(n+1) + diphosphate. Its activity is regulated as follows. Inhibited by the chemical compound K36/GC376, which covalently binds to the nucleophilic cysteine residue. Inhibited by various macrocyclic inhibitors. With respect to regulation, inhibited by the guanidine salt GuHCl. Its function is as follows. Induces the proliferation of the host smooth ER membranes forming long tubular structures. These remodeled membranes probably form the viral factories that contain the replication complex. Induces the disassembly of host Golgi. May play a role in viral replication by interacting with host VAPA, a vesicle-associated membrane protein that plays a role in SNARE-mediated vesicle fusion. This interaction may target replication complex to intracellular membranes. In terms of biological role, displays NTPase activity and RNA helix-unwinding activity. Displays RNA chaperone-like activity and destabilizes dsRNA. Induces the formation of convoluted membranes derived from the host ER. These remodeled membranes probably form the viral factories that contain the replication complex. Initiates host cell death by targeting the mitochondrial outer membrane, leading to the permeabilization of mitochondria, programmed host cell death and viral egress. Probably plays a role in preventing the assembly of host stress granules. Functionally, probable key protein responsible for the formation of membrane alterations by the virus. Induces the formation of convoluted membranes derived from the host ER. These remodeled membranes probably form the viral factories that contain the replication complex. May play a role in targeting replication complex to intracellular membranes. Induces the disassembly of host Golgi and antagonism of Golgi-dependent cellular protein secretion, probably via the mislocalization of COPII-coated vesicles. Viral genome-linked protein is covalently linked to the 5'-end of the positive-strand, negative-strand genomic RNAs and subgenomic RNA. Acts as a genome-linked replication primer. May recruit ribosome to viral RNA thereby promoting viral proteins translation. Interacts with host translation initiation complex to allow the translation of viral proteins. Induces the formation of aggregates of RNA-directed RNA polymerase in the presence of RNA. Through its interaction with the viral RNA-directed RNA polymerase, plays a crucial role in enhancing the polymerase activity. Its function is as follows. Processes the polyprotein. 3CLpro-RdRp is first released by autocleavage, then all other proteins are cleaved. May cleave host polyadenylate-binding protein thereby inhibiting cellular translation. In terms of biological role, replicates genomic and antigenomic RNA by recognizing replications specific signals. Also transcribes a subgenomic mRNA by initiating RNA synthesis internally on antigenomic RNA. This sgRNA codes for structural proteins. Catalyzes the covalent attachment VPg with viral RNAs. The protein is Genome polyprotein of Norovirus (strain Human/NoV/United States/Norwalk/1968/GI) (Hu/NV/NV/1968/US).